Consider the following 199-residue polypeptide: Holliday junction branch migration complex subunit RuvA (199 aa).

A domain I region spans residues 1–64 (MIAKLTGRLD…EDFLRLLGFA (64 aa)). Residues 65-143 (RAEERDWFRL…ALGGISGSGP (79 aa)) are domain II. The tract at residues 144 to 146 (ALS) is flexible linker. The segment at 147–199 (AAAGPVGDAIAALTGLGFKPGEASAAVAAANEELGADASLDALVRVALKKAAK) is domain III.

This sequence belongs to the RuvA family. In terms of assembly, homotetramer. Forms an RuvA(8)-RuvB(12)-Holliday junction (HJ) complex. HJ DNA is sandwiched between 2 RuvA tetramers; dsDNA enters through RuvA and exits via RuvB. An RuvB hexamer assembles on each DNA strand where it exits the tetramer. Each RuvB hexamer is contacted by two RuvA subunits (via domain III) on 2 adjacent RuvB subunits; this complex drives branch migration. In the full resolvosome a probable DNA-RuvA(4)-RuvB(12)-RuvC(2) complex forms which resolves the HJ.

It localises to the cytoplasm. Functionally, the RuvA-RuvB-RuvC complex processes Holliday junction (HJ) DNA during genetic recombination and DNA repair, while the RuvA-RuvB complex plays an important role in the rescue of blocked DNA replication forks via replication fork reversal (RFR). RuvA specifically binds to HJ cruciform DNA, conferring on it an open structure. The RuvB hexamer acts as an ATP-dependent pump, pulling dsDNA into and through the RuvAB complex. HJ branch migration allows RuvC to scan DNA until it finds its consensus sequence, where it cleaves and resolves the cruciform DNA. In Sphingopyxis alaskensis (strain DSM 13593 / LMG 18877 / RB2256) (Sphingomonas alaskensis), this protein is Holliday junction branch migration complex subunit RuvA.